A 716-amino-acid chain; its full sequence is Mitogen-activated protein kinase kinase kinase 5 (716 aa).

Over residues 1 to 27 (MRWLPQISFSSPSSSPSSSLKPVASYS) the composition is skewed to low complexity. 4 disordered regions span residues 1–42 (MRWL…DRFH), 74–98 (ASTSSSTFDSGLTRSPSAFTAVPRS), 119–180 (AANA…YWVN), and 238–302 (YDIT…VTNG). Basic and acidic residues predominate over residues 31–40 (DPDRNQDRDR). Polar residues predominate over residues 75 to 91 (STSSSTFDSGLTRSPSA). Basic and acidic residues predominate over residues 124-137 (GLDDRDRDPERLIS). 3 stretches are compositionally biased toward polar residues: residues 138 to 150 (DRTSSGPPLTSVN), 162 to 173 (ENSSYQDFSPRN), and 242 to 251 (AFSTDNSPIH). Residues 263–273 (RSPQPSRPSSP) are compositionally biased toward low complexity. Positions 346–607 (WKKGKLIGRG…ASMLLEHRFL (262 aa)) constitute a Protein kinase domain. ATP contacts are provided by residues 352–360 (IGRGTFGSV) and Lys-375. The active-site Proton acceptor is Asp-472. Positions 610–633 (SLQPTSPSNSDVSQLFNGMNITEP) are enriched in polar residues. Positions 610 to 716 (SLQPTSPSNS…RRTGVTSDHL (107 aa)) are disordered. Phosphoserine; by PBL27 occurs at positions 617 and 622. Basic and acidic residues predominate over residues 634–648 (SSRREKPNFKLDQVP). Composition is skewed to polar residues over residues 652–661 (NMTSSESESG) and 674–685 (LTGTVNRLSPRS). Phosphoserine; by PBL27 occurs at positions 658 and 660. Thr-677 carries the phosphothreonine; by PBL27 modification. Ser-685 carries the phosphoserine; by PBL27 modification. The segment covering 703–716 (SSDRRRTGVTSDHL) has biased composition (basic and acidic residues).

This sequence belongs to the protein kinase superfamily. STE Ser/Thr protein kinase family. MAP kinase kinase kinase subfamily. As to quaternary structure, interacts with PBL27 at the plasma membrane; disassociation is induced by chitin perception by the CERK1 complex. Interacts with MKK2, MKK4, and MKK5 mainly in the cytosol. In terms of processing, phosphorylated by PBL27 during chitin-mediated signaling in a CERK1-dependent manner. As to expression, mostly expressed in flower buds. Also present in pollen, roots, leaves and seedlings, and, at low levels, in stems and immature siliques.

The protein localises to the cell membrane. It is found in the cytoplasm. Its subcellular location is the cytosol. It carries out the reaction L-seryl-[protein] + ATP = O-phospho-L-seryl-[protein] + ADP + H(+). It catalyses the reaction L-threonyl-[protein] + ATP = O-phospho-L-threonyl-[protein] + ADP + H(+). Functionally, mitogen-activated protein kinase (MAPK) involved in the transduction of signal between the host cell surface chitin receptor complex CERK1-LYK5 and the intracellular MAPK cascade that leads to chitin-induced immunity. Phosphorylates and activates MAPK targets (e.g. MKK4, MKK5, and possibly MKK2) when phosphorylated by PBL27 after elicitation by chitin. Required for resistance to the fungus A.brassicicola. This chain is Mitogen-activated protein kinase kinase kinase 5, found in Arabidopsis thaliana (Mouse-ear cress).